The sequence spans 273 residues: Pantothenate synthetase (273 aa).

27–34 (MGALHEGH) contributes to the ATP binding site. His34 acts as the Proton donor in catalysis. Gln58 serves as a coordination point for (R)-pantoate. A beta-alanine-binding site is contributed by Gln58. 144–147 (GKKD) lines the ATP pocket. Gln150 is a (R)-pantoate binding site. ATP contacts are provided by residues Val173 and 181–184 (LSSR).

Belongs to the pantothenate synthetase family. In terms of assembly, homodimer.

The protein localises to the cytoplasm. It catalyses the reaction (R)-pantoate + beta-alanine + ATP = (R)-pantothenate + AMP + diphosphate + H(+). It participates in cofactor biosynthesis; (R)-pantothenate biosynthesis; (R)-pantothenate from (R)-pantoate and beta-alanine: step 1/1. Functionally, catalyzes the condensation of pantoate with beta-alanine in an ATP-dependent reaction via a pantoyl-adenylate intermediate. This chain is Pantothenate synthetase, found in Sulfurimonas denitrificans (strain ATCC 33889 / DSM 1251) (Thiomicrospira denitrificans (strain ATCC 33889 / DSM 1251)).